We begin with the raw amino-acid sequence, 253 residues long: Phycocyanobilin:ferredoxin oxidoreductase (253 aa).

It belongs to the HY2 family.

The catalysed reaction is (2R,3Z)-phycocyanobilin + 4 oxidized [2Fe-2S]-[ferredoxin] = biliverdin IXalpha + 4 reduced [2Fe-2S]-[ferredoxin] + 4 H(+). Functionally, catalyzes the four-electron reduction of biliverdin IX-alpha (2-electron reduction at both the A and D rings); the reaction proceeds via an isolatable 2-electron intermediate, 181,182-dihydrobiliverdin. The chain is Phycocyanobilin:ferredoxin oxidoreductase (pcyA) from Gloeobacter violaceus (strain ATCC 29082 / PCC 7421).